A 492-amino-acid chain; its full sequence is Stomatal closure-related actin-binding protein 2 (492 aa).

Positions 112–132 (LKKLRDALETMRGRMDGRNRE) form a coiled coil.

Belongs to the SCAB family. Expressed in roots, stems, leaves, siliques and flowers.

The protein localises to the cytoplasm. Its subcellular location is the cytoskeleton. In terms of biological role, probable plant-specific actin binding protein that bundles and stabilizes microfilaments (MFs). This Arabidopsis thaliana (Mouse-ear cress) protein is Stomatal closure-related actin-binding protein 2.